The sequence spans 218 residues: MQADFWHARWANNQIGFHLDEINPYLMRHLSRLRLQAGEQILVPLCGKTLDLAWLAAQGLEVLGVELSEKAVSDFFEEHDLHPEIDQLDGFRRYRVAGITLLQGDFFALQAEHLAQCRAFYDRAALIALPPEMRERYAGHLQAVLPTRSLGLLVTIDYPQAEMAGPPFAVPDEEVRGYYAGGWRIEELERGDVLGVNWKFLERGVSWLDEAVYLLERG.

The S-adenosyl-L-methionine site is built by tryptophan 10, leucine 45, glutamate 66, and arginine 123.

The protein belongs to the class I-like SAM-binding methyltransferase superfamily. TPMT family.

Its subcellular location is the cytoplasm. It carries out the reaction S-adenosyl-L-methionine + a thiopurine = S-adenosyl-L-homocysteine + a thiopurine S-methylether.. This is Thiopurine S-methyltransferase from Pseudomonas aeruginosa (strain ATCC 15692 / DSM 22644 / CIP 104116 / JCM 14847 / LMG 12228 / 1C / PRS 101 / PAO1).